The primary structure comprises 275 residues: 3-methyl-2-oxobutanoate hydroxymethyltransferase (275 aa).

Residues aspartate 55 and aspartate 94 each contribute to the Mg(2+) site. 3-methyl-2-oxobutanoate-binding positions include 55–56 (DS), aspartate 94, and lysine 123. Position 125 (glutamate 125) interacts with Mg(2+). Glutamate 192 serves as the catalytic Proton acceptor.

The protein belongs to the PanB family. As to quaternary structure, homodecamer; pentamer of dimers. It depends on Mg(2+) as a cofactor.

The protein resides in the cytoplasm. The catalysed reaction is 3-methyl-2-oxobutanoate + (6R)-5,10-methylene-5,6,7,8-tetrahydrofolate + H2O = 2-dehydropantoate + (6S)-5,6,7,8-tetrahydrofolate. It functions in the pathway cofactor biosynthesis; (R)-pantothenate biosynthesis; (R)-pantoate from 3-methyl-2-oxobutanoate: step 1/2. Functionally, catalyzes the reversible reaction in which hydroxymethyl group from 5,10-methylenetetrahydrofolate is transferred onto alpha-ketoisovalerate to form ketopantoate. The polypeptide is 3-methyl-2-oxobutanoate hydroxymethyltransferase (Halorhodospira halophila (strain DSM 244 / SL1) (Ectothiorhodospira halophila (strain DSM 244 / SL1))).